A 146-amino-acid polypeptide reads, in one-letter code: Histone H2A.1 (146 aa).

Residue Met-1 is modified to N-acetylmethionine. Residues 1 to 24 are disordered; that stretch reads MDATKTTKGAGGRKGGPRKKSVTK. The SPKK motif motif lies at 142–145; it reads SPKK.

The protein belongs to the histone H2A family. The nucleosome is a histone octamer containing two molecules each of H2A, H2B, H3 and H4 assembled in one H3-H4 heterotetramer and two H2A-H2B heterodimers. The octamer wraps approximately 147 bp of DNA. In terms of tissue distribution, high expression in meristematic tissues, in cells of the root pericycle and in shoot cortical cells undergoing endoduplication of their DNA.

The protein resides in the nucleus. The protein localises to the chromosome. Core component of nucleosome. Nucleosomes wrap and compact DNA into chromatin, limiting DNA accessibility to the cellular machineries which require DNA as a template. Histones thereby play a central role in transcription regulation, DNA repair, DNA replication and chromosomal stability. DNA accessibility is regulated via a complex set of post-translational modifications of histones, also called histone code, and nucleosome remodeling. This chain is Histone H2A.1, found in Solanum lycopersicum (Tomato).